The sequence spans 261 residues: Phosphatidylglycerol--prolipoprotein diacylglyceryl transferase (261 aa).

Helical transmembrane passes span 13–33 (LQIRWYSLSYIFGMIFAYWYI), 50–70 (VISWWVISVILGGRIGYILFY), 86–106 (WNGGMSFHGALVGVMIGMYIF), and 112–132 (IDVLAAFDLGACAVPVGIFFG). A 1,2-diacyl-sn-glycero-3-phospho-(1'-sn-glycerol) is bound at residue Arg133. 3 consecutive transmembrane segments (helical) span residues 169–189 (LYEAFGEGFLLFIITNSLFFF), 197–217 (GMLSSVFCIWYGVIRFFIEFV), and 232–252 (ITMGQLLSIFMIIMGFYFIKL).

This sequence belongs to the Lgt family.

The protein localises to the cell inner membrane. The catalysed reaction is L-cysteinyl-[prolipoprotein] + a 1,2-diacyl-sn-glycero-3-phospho-(1'-sn-glycerol) = an S-1,2-diacyl-sn-glyceryl-L-cysteinyl-[prolipoprotein] + sn-glycerol 1-phosphate + H(+). It functions in the pathway protein modification; lipoprotein biosynthesis (diacylglyceryl transfer). In terms of biological role, catalyzes the transfer of the diacylglyceryl group from phosphatidylglycerol to the sulfhydryl group of the N-terminal cysteine of a prolipoprotein, the first step in the formation of mature lipoproteins. The protein is Phosphatidylglycerol--prolipoprotein diacylglyceryl transferase of Ehrlichia canis (strain Jake).